The sequence spans 256 residues: Acidic leucine-rich nuclear phosphoprotein 32 family member E (256 aa).

LRR repeat units lie at residues 43 to 64 (ELEF…PTLS), 65 to 87 (KLRK…AERC), and 89 to 110 (NLTY…EALQ). Positions 123 to 161 (CEITNLEDYRDSIFDLLQQITYLDGFDQEDNEAPDSEDD) constitute an LRRCT domain. Residues 147–256 (GFDQEDNEAP…PEDEGEEEDD (110 aa)) form a disordered region. Composition is skewed to acidic residues over residues 148-205 (FDQE…EEEV) and 215-235 (IQDE…EEEA). Positions 204 to 256 (EVGLSYLMKEEIQDEDDDDDYVEEGGDEEEEAEGIRGEKRKRDPEDEGEEEDD) are ZID domain. The span at 236–247 (EGIRGEKRKRDP) shows a compositional bias: basic and acidic residues.

The protein belongs to the ANP32 family. Component of a SWR1-like complex. Interacts with H2A.Z/H2AZ1.

The protein localises to the cytoplasm. Its subcellular location is the nucleus. In terms of biological role, histone chaperone that specifically mediates the genome-wide removal of histone H2A.Z/H2AZ1 from the nucleosome: removes H2A.Z/H2AZ1 from its normal sites of deposition, especially from enhancer and insulator regions. Not involved in deposition of H2A.Z/H2AZ1 in the nucleosome. May stabilize the evicted H2A.Z/H2AZ1-H2B dimer, thus shifting the equilibrium towards dissociation and the off-chromatin state. Inhibits activity of protein phosphatase 2A (PP2A). Does not inhibit protein phosphatase 1. May play a role in cerebellar development and synaptogenesis. This is Acidic leucine-rich nuclear phosphoprotein 32 family member E (ANP32E) from Gallus gallus (Chicken).